The chain runs to 304 residues: Sulfate adenylyltransferase subunit 2 (304 aa).

The protein belongs to the PAPS reductase family. CysD subfamily. As to quaternary structure, heterodimer composed of CysD, the smaller subunit, and CysNC.

The catalysed reaction is sulfate + ATP + H(+) = adenosine 5'-phosphosulfate + diphosphate. The protein operates within sulfur metabolism; hydrogen sulfide biosynthesis; sulfite from sulfate: step 1/3. Its function is as follows. With CysN forms the ATP sulfurylase (ATPS) that catalyzes the adenylation of sulfate producing adenosine 5'-phosphosulfate (APS) and diphosphate, the first enzymatic step in sulfur assimilation pathway. APS synthesis involves the formation of a high-energy phosphoric-sulfuric acid anhydride bond driven by GTP hydrolysis by CysN coupled to ATP hydrolysis by CysD. The polypeptide is Sulfate adenylyltransferase subunit 2 (Xylella fastidiosa (strain Temecula1 / ATCC 700964)).